The following is a 207-amino-acid chain: Probable GTP-binding protein EngB (207 aa).

An EngB-type G domain is found at 23–203; it reads GAPEVCFVGR…GAHIENWISP (181 aa). Residues 31 to 38, 58 to 62, 83 to 86, 150 to 153, and 182 to 184 each bind GTP; these read GRSNAGKS, GRTRL, DLPG, TKAD, and FSS. Mg(2+) contacts are provided by serine 38 and threonine 60.

The protein belongs to the TRAFAC class TrmE-Era-EngA-EngB-Septin-like GTPase superfamily. EngB GTPase family. Mg(2+) is required as a cofactor.

In terms of biological role, necessary for normal cell division and for the maintenance of normal septation. This Bordetella bronchiseptica (strain ATCC BAA-588 / NCTC 13252 / RB50) (Alcaligenes bronchisepticus) protein is Probable GTP-binding protein EngB.